The sequence spans 460 residues: TNF receptor-associated factor family protein DDB_G0290883 (460 aa).

The RING-type; degenerate zinc finger occupies 27–67 (CPICFEFIYKKQIYQCKSGHHACKECWEKSLETKKECMTCK). TRAF-type zinc fingers lie at residues 141-194 (SHLI…KKEL) and 196-253 (THYK…SELQ). Residues 320 to 448 (GYRNKWIISN…DDKLTIEIYI (129 aa)) enclose the MATH domain.

Belongs to the TNF receptor-associated factor family. A subfamily.

The protein resides in the cytoplasm. Its function is as follows. Probable adapter protein and signal transducer that links members of the tumor necrosis factor receptor family to different signaling pathways by association with the receptor cytoplasmic domain and kinases. The protein is TNF receptor-associated factor family protein DDB_G0290883 of Dictyostelium discoideum (Social amoeba).